A 345-amino-acid chain; its full sequence is Putative pyridoxal reductase (345 aa).

Tyr-60 (proton donor) is an active-site residue.

The protein belongs to the aldo/keto reductase family.

The protein resides in the cytoplasm. The protein localises to the nucleus. It carries out the reaction pyridoxine + NADP(+) = pyridoxal + NADPH + H(+). Its pathway is cofactor degradation; B6 vitamer degradation; pyridoxal from pyridoxine (dehydrogenase route): step 1/1. In terms of biological role, catalyzes the reduction of pyridoxal (PL) with NADPH and oxidation of pyridoxine (PN) with NADP(+). This is Putative pyridoxal reductase from Saccharomyces cerevisiae (strain ATCC 204508 / S288c) (Baker's yeast).